A 417-amino-acid polypeptide reads, in one-letter code: CinA-like protein (417 aa).

This sequence belongs to the CinA family.

This Microcystis aeruginosa (strain NIES-843 / IAM M-2473) protein is CinA-like protein.